The following is a 264-amino-acid chain: uncharacterized protein (264 aa).

Position 8 to 15 (8 to 15 (IQGGTGKT)) interacts with ATP.

This is an uncharacterized protein from Methanocaldococcus jannaschii (strain ATCC 43067 / DSM 2661 / JAL-1 / JCM 10045 / NBRC 100440) (Methanococcus jannaschii).